Here is a 194-residue protein sequence, read N- to C-terminus: UPF0301 protein FTA_1286 (194 aa).

The protein belongs to the UPF0301 (AlgH) family.

This is UPF0301 protein FTA_1286 from Francisella tularensis subsp. holarctica (strain FTNF002-00 / FTA).